The following is a 220-amino-acid chain: Metalloproteinase inhibitor 2 (220 aa).

The signal sequence occupies residues 1-26 (MGAAARSLRLALGLLLLATLLRPADA). Residue C27 participates in Zn(2+) binding. 2 involved in metalloproteinase-binding regions span residues 27–30 (CSCS) and 95–96 (SA). 6 cysteine pairs are disulfide-bonded: C27-C98, C29-C127, C39-C152, C154-C201, C159-C164, and C172-C193. Residues 27-152 (CSCSPVHPQQ…SLNHRYQMGC (126 aa)) enclose the NTR domain.

The protein belongs to the protease inhibitor I35 (TIMP) family. As to quaternary structure, interacts (via the C-terminal) with MMP2 (via the C-terminal PEX domain); the interaction inhibits the MMP2 activity. The activity of TIMP2 is dependent on the presence of disulfide bonds.

It is found in the secreted. Complexes with metalloproteinases (such as collagenases) and irreversibly inactivates them by binding to their catalytic zinc cofactor. The protein is Metalloproteinase inhibitor 2 (Timp2) of Rattus norvegicus (Rat).